A 680-amino-acid polypeptide reads, in one-letter code: Potassium-transporting ATPase ATP-binding subunit (680 aa).

4 consecutive transmembrane segments (helical) span residues 37-57 (VIFVTEAMAALVTLFFVLDVA), 69-89 (IAAWLWFTVLFATFAEAVAEG), 223-243 (ILLSGLTLIFLIAVVTLWGLA), and 257-277 (ALLVTLIPTTIGGLLSAIGIA). The active-site 4-aspartylphosphate intermediate is Asp-307. Residues Asp-344, Glu-348, 375 to 382 (FTAETRLS), and Lys-393 contribute to the ATP site. Mg(2+) is bound by residues Asp-516 and Asp-520. The next 3 membrane-spanning stretches (helical) occupy residues 586–606 (FAIIPALFVTTYPALGVLNIM), 614–634 (AILSAVIFNALIIVALIPLAL), and 652–672 (LLVYGLGGLVLPFAGIKLIDL).

This sequence belongs to the cation transport ATPase (P-type) (TC 3.A.3) family. Type IA subfamily. The system is composed of three essential subunits: KdpA, KdpB and KdpC.

It is found in the cell inner membrane. It carries out the reaction K(+)(out) + ATP + H2O = K(+)(in) + ADP + phosphate + H(+). In terms of biological role, part of the high-affinity ATP-driven potassium transport (or Kdp) system, which catalyzes the hydrolysis of ATP coupled with the electrogenic transport of potassium into the cytoplasm. This subunit is responsible for energy coupling to the transport system and for the release of the potassium ions to the cytoplasm. The chain is Potassium-transporting ATPase ATP-binding subunit from Rhizobium meliloti (strain 1021) (Ensifer meliloti).